We begin with the raw amino-acid sequence, 272 residues long: Tryptophan synthase alpha chain (272 aa).

Residues Glu-49 and Asp-60 each act as proton acceptor in the active site.

It belongs to the TrpA family. Tetramer of two alpha and two beta chains.

The catalysed reaction is (1S,2R)-1-C-(indol-3-yl)glycerol 3-phosphate + L-serine = D-glyceraldehyde 3-phosphate + L-tryptophan + H2O. The protein operates within amino-acid biosynthesis; L-tryptophan biosynthesis; L-tryptophan from chorismate: step 5/5. Functionally, the alpha subunit is responsible for the aldol cleavage of indoleglycerol phosphate to indole and glyceraldehyde 3-phosphate. The polypeptide is Tryptophan synthase alpha chain (Polaromonas naphthalenivorans (strain CJ2)).